We begin with the raw amino-acid sequence, 167 residues long: uncharacterized protein (167 aa).

Positions 1 to 23 are cleaved as a signal peptide; it reads MKRLHKRFLLATFCALFTATLQA. Cysteines 39 and 77 form a disulfide.

This sequence belongs to the fimbrial protein family.

The protein resides in the fimbrium. This is an uncharacterized protein from Escherichia coli (strain K12).